We begin with the raw amino-acid sequence, 205 residues long: Myb-related protein 305 (205 aa).

HTH myb-type domains are found at residues aspartate 10–leucine 62 and arginine 63–methionine 117. 2 consecutive DNA-binding regions (H-T-H motif) follow at residues tryptophan 38–leucine 62 and tryptophan 90–isoleucine 113.

In terms of tissue distribution, expressed only in flowers.

It localises to the nucleus. In terms of biological role, transcription factor. The protein is Myb-related protein 305 of Antirrhinum majus (Garden snapdragon).